A 374-amino-acid chain; its full sequence is Chaperone protein DnaJ (374 aa).

In terms of domain architecture, J spans 5-70 (DYYEVLGVER…NKRAAYDQYG (66 aa)). The CR-type zinc finger occupies 133–211 (GTSVNIRVPT…CHGEGRVEEY (79 aa)). Zn(2+) contacts are provided by Cys146, Cys149, Cys163, Cys166, Cys185, Cys188, Cys199, and Cys202. CXXCXGXG motif repeat units lie at residues 146–153 (CKPCDGSG), 163–170 (CPTCGGIG), 185–192 (CPRCHGQG), and 199–206 (CDSCHGEG).

The protein belongs to the DnaJ family. In terms of assembly, homodimer. The cofactor is Zn(2+).

The protein resides in the cytoplasm. In terms of biological role, participates actively in the response to hyperosmotic and heat shock by preventing the aggregation of stress-denatured proteins and by disaggregating proteins, also in an autonomous, DnaK-independent fashion. Unfolded proteins bind initially to DnaJ; upon interaction with the DnaJ-bound protein, DnaK hydrolyzes its bound ATP, resulting in the formation of a stable complex. GrpE releases ADP from DnaK; ATP binding to DnaK triggers the release of the substrate protein, thus completing the reaction cycle. Several rounds of ATP-dependent interactions between DnaJ, DnaK and GrpE are required for fully efficient folding. Also involved, together with DnaK and GrpE, in the DNA replication of plasmids through activation of initiation proteins. This Pseudomonas fluorescens (strain SBW25) protein is Chaperone protein DnaJ.